The sequence spans 201 residues: Adenylyl-sulfate kinase (201 aa).

ATP is bound at residue 35 to 42 (GLSGSGKS). The active-site Phosphoserine intermediate is S109.

Belongs to the APS kinase family.

The catalysed reaction is adenosine 5'-phosphosulfate + ATP = 3'-phosphoadenylyl sulfate + ADP + H(+). It functions in the pathway sulfur metabolism; hydrogen sulfide biosynthesis; sulfite from sulfate: step 2/3. In terms of biological role, catalyzes the synthesis of activated sulfate. The protein is Adenylyl-sulfate kinase of Citrobacter koseri (strain ATCC BAA-895 / CDC 4225-83 / SGSC4696).